The chain runs to 155 residues: Ribosomal RNA large subunit methyltransferase H (155 aa).

S-adenosyl-L-methionine is bound by residues Leu72, Gly103, and 122–127 (LSALTL).

It belongs to the RNA methyltransferase RlmH family. Homodimer.

It localises to the cytoplasm. It catalyses the reaction pseudouridine(1915) in 23S rRNA + S-adenosyl-L-methionine = N(3)-methylpseudouridine(1915) in 23S rRNA + S-adenosyl-L-homocysteine + H(+). Functionally, specifically methylates the pseudouridine at position 1915 (m3Psi1915) in 23S rRNA. This Salmonella choleraesuis (strain SC-B67) protein is Ribosomal RNA large subunit methyltransferase H.